The following is a 315-amino-acid chain: UDP-3-O-acyl-N-acetylglucosamine deacetylase (315 aa).

His-78, His-235, and Asp-239 together coordinate Zn(2+). The active-site Proton donor is the His-262.

The protein belongs to the LpxC family. Zn(2+) is required as a cofactor.

It carries out the reaction a UDP-3-O-[(3R)-3-hydroxyacyl]-N-acetyl-alpha-D-glucosamine + H2O = a UDP-3-O-[(3R)-3-hydroxyacyl]-alpha-D-glucosamine + acetate. The protein operates within glycolipid biosynthesis; lipid IV(A) biosynthesis; lipid IV(A) from (3R)-3-hydroxytetradecanoyl-[acyl-carrier-protein] and UDP-N-acetyl-alpha-D-glucosamine: step 2/6. Functionally, catalyzes the hydrolysis of UDP-3-O-myristoyl-N-acetylglucosamine to form UDP-3-O-myristoylglucosamine and acetate, the committed step in lipid A biosynthesis. This chain is UDP-3-O-acyl-N-acetylglucosamine deacetylase, found in Syntrophus aciditrophicus (strain SB).